Reading from the N-terminus, the 302-residue chain is Protein translocase subunit SecF (302 aa).

The next 6 helical transmembrane spans lie at 12–32 (FFIY…FVKG), 138–158 (YAWY…TIRF), 166–186 (AILA…LFGI), 190–210 (LTAI…TIVV), 249–269 (FLVV…FAFG), and 272–292 (VGVI…VIGM).

Belongs to the SecD/SecF family. SecF subfamily. In terms of assembly, forms a complex with SecD. Part of the essential Sec protein translocation apparatus which comprises SecA, SecYEG and auxiliary proteins SecDF. Other proteins may also be involved.

The protein resides in the cell inner membrane. Its function is as follows. Part of the Sec protein translocase complex. Interacts with the SecYEG preprotein conducting channel. SecDF uses the proton motive force (PMF) to complete protein translocation after the ATP-dependent function of SecA. This is Protein translocase subunit SecF from Petrotoga mobilis (strain DSM 10674 / SJ95).